The primary structure comprises 37 residues: Large ribosomal subunit protein bL36 (37 aa).

It belongs to the bacterial ribosomal protein bL36 family.

The chain is Large ribosomal subunit protein bL36 from Shewanella woodyi (strain ATCC 51908 / MS32).